A 483-amino-acid polypeptide reads, in one-letter code: NADH-quinone oxidoreductase subunit N (483 aa).

13 helical membrane-spanning segments follow: residues 13–33 (PALPEILLAVGAMALLMYGVF), 45–65 (GALALFALVGAFLIIEPNAYV), 80–100 (FMKLLILLAAAAAIVMSLTFI), 111–131 (PVLIILATLGMFMMVSANGLI), 165–185 (FVLGALASGMLLYGASLIYGF), 205–225 (IGVIFGIVFVLAGLAFKISAV), 244–264 (AFFAGAPKVAAMALILRVLFV), 276–296 (IIVFIAIASMVLGAFAAIGQS), 301–321 (LMAYSSISHMGFAMVGLAAGT), 328–348 (VLIYLVIYVVMNAGVFCCILA), 373–393 (AFMMAMLMFSLAGVPPLAGFF), 407–429 (LYPLAVIGVLASVVGAFYYLRIV), and 452–472 (VLGISGVFTLFFFVYPAPLIL).

It belongs to the complex I subunit 2 family. As to quaternary structure, NDH-1 is composed of 14 different subunits. Subunits NuoA, H, J, K, L, M, N constitute the membrane sector of the complex.

The protein localises to the cell inner membrane. It carries out the reaction a quinone + NADH + 5 H(+)(in) = a quinol + NAD(+) + 4 H(+)(out). Functionally, NDH-1 shuttles electrons from NADH, via FMN and iron-sulfur (Fe-S) centers, to quinones in the respiratory chain. The immediate electron acceptor for the enzyme in this species is believed to be ubiquinone. Couples the redox reaction to proton translocation (for every two electrons transferred, four hydrogen ions are translocated across the cytoplasmic membrane), and thus conserves the redox energy in a proton gradient. In Parvibaculum lavamentivorans (strain DS-1 / DSM 13023 / NCIMB 13966), this protein is NADH-quinone oxidoreductase subunit N.